The sequence spans 311 residues: 1,4-dihydroxy-2-naphthoate octaprenyltransferase (311 aa).

A run of 9 helical transmembrane segments spans residues 31-51, 53-73, 104-126, 131-153, 157-177, 182-202, 220-240, 242-262, and 290-310; these read LTAS…YVKV, LLLF…TNLF, TILQ…ICAS, LALI…LPIA, FGEL…SFFI, INMQ…AINL, LAIL…FAVA, IWVV…VVFL, and TAQT…ISYF.

The protein belongs to the MenA family. Type 1 subfamily.

It is found in the cell membrane. The catalysed reaction is an all-trans-polyprenyl diphosphate + 1,4-dihydroxy-2-naphthoate + H(+) = a 2-demethylmenaquinol + CO2 + diphosphate. It participates in quinol/quinone metabolism; menaquinone biosynthesis; menaquinol from 1,4-dihydroxy-2-naphthoate: step 1/2. Conversion of 1,4-dihydroxy-2-naphthoate (DHNA) to demethylmenaquinone (DMK). This Bacillus subtilis (strain 168) protein is 1,4-dihydroxy-2-naphthoate octaprenyltransferase.